The following is a 172-amino-acid chain: Protein GrpE (172 aa).

This sequence belongs to the GrpE family. As to quaternary structure, homodimer.

Its subcellular location is the cytoplasm. In terms of biological role, participates actively in the response to hyperosmotic and heat shock by preventing the aggregation of stress-denatured proteins, in association with DnaK and GrpE. It is the nucleotide exchange factor for DnaK and may function as a thermosensor. Unfolded proteins bind initially to DnaJ; upon interaction with the DnaJ-bound protein, DnaK hydrolyzes its bound ATP, resulting in the formation of a stable complex. GrpE releases ADP from DnaK; ATP binding to DnaK triggers the release of the substrate protein, thus completing the reaction cycle. Several rounds of ATP-dependent interactions between DnaJ, DnaK and GrpE are required for fully efficient folding. The sequence is that of Protein GrpE from Thermotoga maritima (strain ATCC 43589 / DSM 3109 / JCM 10099 / NBRC 100826 / MSB8).